The primary structure comprises 404 residues: Glucose-1-phosphate adenylyltransferase (404 aa).

Residues Y99, G164, 179–180 (EK), and S197 contribute to the alpha-D-glucose 1-phosphate site.

This sequence belongs to the bacterial/plant glucose-1-phosphate adenylyltransferase family.

It carries out the reaction alpha-D-glucose 1-phosphate + ATP + H(+) = ADP-alpha-D-glucose + diphosphate. It functions in the pathway capsule biogenesis; capsule polysaccharide biosynthesis. The protein operates within glycan biosynthesis; glycogen biosynthesis. Functionally, involved in the biosynthesis of ADP-glucose, a building block, required in the biosynthesis of maltose-1-phosphate (M1P) and in the elongation reactions to produce linear alpha-1,4-glucans. Catalyzes the reaction between ATP and alpha-D-glucose 1-phosphate (G1P) to produce pyrophosphate and ADP-Glc. This chain is Glucose-1-phosphate adenylyltransferase, found in Mycobacterium ulcerans (strain Agy99).